The sequence spans 110 residues: Phosphoribosyl-ATP pyrophosphatase (110 aa).

Belongs to the PRA-PH family.

It is found in the cytoplasm. The enzyme catalyses 1-(5-phospho-beta-D-ribosyl)-ATP + H2O = 1-(5-phospho-beta-D-ribosyl)-5'-AMP + diphosphate + H(+). It functions in the pathway amino-acid biosynthesis; L-histidine biosynthesis; L-histidine from 5-phospho-alpha-D-ribose 1-diphosphate: step 2/9. The sequence is that of Phosphoribosyl-ATP pyrophosphatase from Pseudomonas fluorescens (strain SBW25).